A 130-amino-acid chain; its full sequence is Small ribosomal subunit protein uS9 (130 aa).

This sequence belongs to the universal ribosomal protein uS9 family. In terms of assembly, part of the 30S ribosomal subunit.

The sequence is that of Small ribosomal subunit protein uS9 (rpsI) from Bacillus subtilis (strain 168).